The primary structure comprises 109 residues: Ribonuclease (109 aa).

Glu72 functions as the Proton acceptor in the catalytic mechanism. The active-site Proton donor is His101.

Belongs to the ribonuclease N1/T1 family.

Its subcellular location is the secreted. Functionally, hydrolyzes phosphodiester bonds in RNA, poly- and oligoribonucleotides resulting in 3'-nucleoside monophosphates via 2',3'-cyclophosphate intermediates. This chain is Ribonuclease, found in Heyndrickxia coagulans (Weizmannia coagulans).